The chain runs to 666 residues: NAD(P)H-quinone oxidoreductase subunit 5, organellar chromatophore 1 (666 aa).

The next 15 helical transmembrane spans lie at leucine 8 to isoleucine 28, alanine 41 to alanine 61, valine 90 to valine 110, serine 121 to leucine 141, leucine 145 to phenylalanine 165, phenylalanine 190 to alanine 210, glycine 220 to alanine 240, threonine 259 to alanine 279, isoleucine 293 to glutamine 313, leucine 328 to isoleucine 348, glycine 396 to tryptophan 416, serine 428 to phenylalanine 448, threonine 497 to tryptophan 517, phenylalanine 542 to isoleucine 562, and glycine 643 to phenylalanine 663.

It belongs to the complex I subunit 5 family. As to quaternary structure, NDH is composed of at least 16 different subunits, 5 of which are encoded in the nucleus.

The protein resides in the plastid. The protein localises to the organellar chromatophore thylakoid membrane. It catalyses the reaction a plastoquinone + NADH + (n+1) H(+)(in) = a plastoquinol + NAD(+) + n H(+)(out). It carries out the reaction a plastoquinone + NADPH + (n+1) H(+)(in) = a plastoquinol + NADP(+) + n H(+)(out). Functionally, NDH shuttles electrons from NAD(P)H:plastoquinone, via FMN and iron-sulfur (Fe-S) centers, to quinones in the photosynthetic chain and possibly in a chloroplast respiratory chain. The immediate electron acceptor for the enzyme in this species is believed to be plastoquinone. Couples the redox reaction to proton translocation, and thus conserves the redox energy in a proton gradient. The sequence is that of NAD(P)H-quinone oxidoreductase subunit 5, organellar chromatophore 1 (ndhF1) from Paulinella chromatophora.